Consider the following 445-residue polypeptide: Rab GDP dissociation inhibitor beta (445 aa).

Met1 carries the post-translational modification N-acetylmethionine. At Lys57 the chain carries N6-succinyllysine. Ser61 is subject to Phosphoserine. Lys112 is modified (N6-acetyllysine). Position 130 is a phosphoserine (Ser130). An N6-acetyllysine modification is found at Lys269. Ser382 carries the post-translational modification Phosphoserine.

This sequence belongs to the Rab GDI family. In terms of assembly, interacts with RHOH. Interacts with the GDP-bound inactive forms of RAB3A, RAB3B, RAB3C, RAB5A, RAB5B, RAB5C, RAB8A, RAB8B, RAB10, RAB12, RAB35, and RAB43; binds RAB3D to a lesser extent. Interacts with DZIP1; this interaction negatively regulates the interaction of GDI2 with GDP-bound RAB8A. As to expression, ubiquitous.

Its subcellular location is the cytoplasm. The protein resides in the membrane. It is found in the golgi apparatus. It localises to the trans-Golgi network. Its function is as follows. GDP-dissociation inhibitor preventing the GDP to GTP exchange of most Rab proteins. By keeping these small GTPases in their inactive GDP-bound form regulates intracellular membrane trafficking. Negatively regulates protein transport to the cilium and ciliogenesis through the inhibition of RAB8A. The protein is Rab GDP dissociation inhibitor beta (GDI2) of Homo sapiens (Human).